Here is a 272-residue protein sequence, read N- to C-terminus: HMP-PP phosphatase (272 aa).

The active-site Nucleophile is the aspartate 8. 3 residues coordinate Mg(2+): aspartate 8, aspartate 10, and aspartate 212.

It belongs to the HAD-like hydrolase superfamily. Cof family. Mg(2+) serves as cofactor.

It catalyses the reaction 4-amino-2-methyl-5-(diphosphooxymethyl)pyrimidine + H2O = 4-amino-2-methyl-5-(phosphooxymethyl)pyrimidine + phosphate + H(+). In terms of biological role, catalyzes the hydrolysis of 4-amino-2-methyl-5-hydroxymethylpyrimidine pyrophosphate (HMP-PP) to 4-amino-2-methyl-5-hydroxymethylpyrimidine phosphate (HMP-P). The chain is HMP-PP phosphatase from Cronobacter sakazakii (strain ATCC BAA-894) (Enterobacter sakazakii).